A 462-amino-acid polypeptide reads, in one-letter code: Mitochondrial-processing peptidase subunit beta (462 aa).

The transit peptide at methionine 1–serine 20 directs the protein to the mitochondrion. Zn(2+) is bound at residue histidine 70. Glutamate 73 (proton acceptor) is an active-site residue. Residues histidine 74 and glutamate 150 each contribute to the Zn(2+) site. At serine 243 the chain carries Phosphoserine.

Belongs to the peptidase M16 family. In terms of assembly, heterodimer of MAS2 (alpha) and MAS1 (beta) subunits, forming the mitochondrial processing protease (MPP) in which MAS2 is involved in substrate recognition and binding and MAS1 is the catalytic subunit. Zn(2+) serves as cofactor.

The protein localises to the mitochondrion matrix. The catalysed reaction is Release of N-terminal transit peptides from precursor proteins imported into the mitochondrion, typically with Arg in position P2.. Binding to MAS2 is required for catalytic activity. Inhibited by high levels (&gt; 1uM) of zinc. Inhibited by metal chelators ethylenediaminetetraacetic acid (EDTA) and O-phenanthroline. In terms of biological role, catalytic subunit of the essential mitochondrial processing protease (MPP), which cleaves the mitochondrial sequence off newly imported precursors proteins. Preferentially, cleaves after an arginine at position P2. The sequence is that of Mitochondrial-processing peptidase subunit beta from Saccharomyces cerevisiae (strain ATCC 204508 / S288c) (Baker's yeast).